The primary structure comprises 149 residues: Large ribosomal subunit protein uL13 (149 aa).

The protein belongs to the universal ribosomal protein uL13 family. Part of the 50S ribosomal subunit.

This protein is one of the early assembly proteins of the 50S ribosomal subunit, although it is not seen to bind rRNA by itself. It is important during the early stages of 50S assembly. The chain is Large ribosomal subunit protein uL13 from Thermosipho africanus (strain TCF52B).